A 116-amino-acid polypeptide reads, in one-letter code: uncharacterized protein (116 aa).

Belongs to the mimivirus L15/L51/R83 family.

This is an uncharacterized protein from Acanthamoeba polyphaga mimivirus (APMV).